The chain runs to 449 residues: Rubisco accumulation factor 1.2, chloroplastic (449 aa).

The N-terminal 61 residues, 1 to 61 (MFSLKSLISS…NMIPKNPPAR (61 aa)), are a transit peptide targeting the chloroplast. The N-terminal alpha-helix stretch occupies residues 75-264 (IPTQFRSLDS…KAKNRLNTEL (190 aa)). The stretch at 262–288 (TELYGDKEAEKEKEKKKKEEEVKAIRI) forms a coiled coil. The segment at 288-434 (IPVVRLKFGE…GMVVLVVRPP (147 aa)) is C-terminal beta sheet.

The protein belongs to the RAF family. Homodimer.

The protein localises to the plastid. The protein resides in the chloroplast. In terms of biological role, required for assembly or stability of RuBisCO. Acts at a postchaperonin step to fold and/or assemble the large subunit (rbcL) into RuBisCO. RAF1 brackets an rbcL dimer (rbcL(2)), leading to rbcL(8)-RAF1(4) complex formation. In the next step, RBCS displaces RAF1, thus resulting in holoenzyme formation. This chain is Rubisco accumulation factor 1.2, chloroplastic, found in Arabidopsis thaliana (Mouse-ear cress).